The chain runs to 302 residues: uncharacterized protein (302 aa).

It belongs to the HAD-like hydrolase superfamily.

It localises to the cytoplasm. It is found in the nucleus. This is an uncharacterized protein from Schizosaccharomyces pombe (strain 972 / ATCC 24843) (Fission yeast).